The sequence spans 171 residues: Pro-corazonin (171 aa).

The first 20 residues, 1-20, serve as a signal peptide directing secretion; sequence MLHTRTIALLLVGLVVLVNA. Residue Gln-21 is modified to Pyrrolidone carboxylic acid. Asparagine amide is present on Asn-31. A propeptide spanning residues 82 to 171 is cleaved from the precursor; it reads FLRNPCDLRV…GFSDHRQKIA (90 aa).

The protein belongs to the corazonin family.

The protein resides in the secreted. Its function is as follows. Cardioactive peptide. Corazonin is probably involved in the physiological regulation of the heart beat. The sequence is that of Pro-corazonin from Anopheles gambiae (African malaria mosquito).